We begin with the raw amino-acid sequence, 196 residues long: ATP-dependent Clp protease proteolytic subunit (196 aa).

Ser-101 (nucleophile) is an active-site residue. The active site involves His-126.

This sequence belongs to the peptidase S14 family. Component of the chloroplastic Clp protease core complex.

It is found in the plastid. The protein resides in the chloroplast stroma. The catalysed reaction is Hydrolysis of proteins to small peptides in the presence of ATP and magnesium. alpha-casein is the usual test substrate. In the absence of ATP, only oligopeptides shorter than five residues are hydrolyzed (such as succinyl-Leu-Tyr-|-NHMec, and Leu-Tyr-Leu-|-Tyr-Trp, in which cleavage of the -Tyr-|-Leu- and -Tyr-|-Trp bonds also occurs).. Functionally, cleaves peptides in various proteins in a process that requires ATP hydrolysis. Has a chymotrypsin-like activity. Plays a major role in the degradation of misfolded proteins. This is ATP-dependent Clp protease proteolytic subunit from Pinus thunbergii (Japanese black pine).